Reading from the N-terminus, the 510-residue chain is MTTIRTLVVAAEAFPLAKTGGLGDAVSGMVQALGHRPGGVDVQCELLMPAYRGTLDMVYRPRTVARLGGLPGGPASLVRGHCPGSGLSVLLLRNDALYDRPGIYVDDSGQGYPDNARRYAALAHAAARLAQGLPGLRPPHVVHAHDWHAALAPLLIHAAGLHYVKTLLTIHNLAFQGTFPAELASALGIPLACRHDDGALSDDSVNFLKAGIRYATRVTTVSRAYAREILTPAFGCGLHGLLRARGADLSPVPNGIDTALWNPAADPHLGGLRFDALDMRNKACCKAALQAELGLQPRADATVLAMGSRLTGQKMADVAIAALPALLEAHEHLQFALIGRGEPALETALRALAARYPGRCAVHIGYDEPLAHRLHAGADLLLHGSRFEPFGLTPLYAMRYGTLPVASRVGGMVDTIRDPGPAVEESCAGQGTGFLFDGSEPADMQLAVARALRALAKPAVCDAMRRNAMQADFSWRASAQAYAGLYASLASAPQRGRVPAPTLPLLANAA.

Lysine 18 serves as a coordination point for ADP-alpha-D-glucose.

This sequence belongs to the glycosyltransferase 1 family. Bacterial/plant glycogen synthase subfamily.

The enzyme catalyses [(1-&gt;4)-alpha-D-glucosyl](n) + ADP-alpha-D-glucose = [(1-&gt;4)-alpha-D-glucosyl](n+1) + ADP + H(+). It functions in the pathway glycan biosynthesis; glycogen biosynthesis. Synthesizes alpha-1,4-glucan chains using ADP-glucose. This is Glycogen synthase from Bordetella parapertussis (strain 12822 / ATCC BAA-587 / NCTC 13253).